The sequence spans 513 residues: Steroid (22S)-hydroxylase (513 aa).

The chain crosses the membrane as a helical span at residues 8–28 (TLLPLLLLPSLLSLLLFLILL). The tract at residues 252–277 (DIKEEDQEEEEVKTEDEAEMSKSDHV) is disordered. The segment covering 254-269 (KEEDQEEEEVKTEDEA) has biased composition (acidic residues). Residue Cys462 coordinates heme.

This sequence belongs to the cytochrome P450 family. Heme serves as cofactor. Expressed in stems, leaves, shoots, and roots, with a higher expression in siliques and apical shoots.

It is found in the membrane. The enzyme catalyses a C27-steroid + reduced [NADPH--hemoprotein reductase] + O2 = a (22S)-22-hydroxy C27-steroid + oxidized [NADPH--hemoprotein reductase] + H2O + H(+). It carries out the reaction a C28-steroid + reduced [NADPH--hemoprotein reductase] + O2 = a (22S)-22-hydroxy C28-steroid + oxidized [NADPH--hemoprotein reductase] + H2O + H(+). It catalyses the reaction a C29-steroid + reduced [NADPH--hemoprotein reductase] + O2 = a (22S)-22-hydroxy C29-steroid + oxidized [NADPH--hemoprotein reductase] + H2O + H(+). The catalysed reaction is cholesterol + reduced [NADPH--hemoprotein reductase] + O2 = (22S)-22-hydroxycholesterol + oxidized [NADPH--hemoprotein reductase] + H2O + H(+). The enzyme catalyses cholestanol + reduced [NADPH--hemoprotein reductase] + O2 = (22S)-22-hydroxycholestanol + oxidized [NADPH--hemoprotein reductase] + H2O + H(+). It carries out the reaction campestanol + reduced [NADPH--hemoprotein reductase] + O2 = 6-deoxycathasterone + oxidized [NADPH--hemoprotein reductase] + H2O + H(+). It catalyses the reaction campesterol + reduced [NADPH--hemoprotein reductase] + O2 = (22S)-22-hydroxycampesterol + oxidized [NADPH--hemoprotein reductase] + H2O + H(+). The catalysed reaction is 6-oxocampestanol + reduced [NADPH--hemoprotein reductase] + O2 = cathasterone + oxidized [NADPH--hemoprotein reductase] + H2O + H(+). The enzyme catalyses sitosterol + reduced [NADPH--hemoprotein reductase] + O2 = (22S)-22-hydroxysitosterol + oxidized [NADPH--hemoprotein reductase] + H2O + H(+). The protein operates within plant hormone biosynthesis; brassinosteroid biosynthesis. Catalyzes the C22-alpha-hydroxylation step in brassinosteroids biosynthesis. Converts campesterol (CR) to (22S)-22-hydroxycampesterol (22-OHCR, 22-hydroxyCR), campestanol (CN) to 6-deoxycathasterone (6-deoxoCT), and 6-oxocampestanol (6-oxoCN) to cathasterone (CT). Can also use cholesterol and cholestanol as substrates. This Arabidopsis thaliana (Mouse-ear cress) protein is Steroid (22S)-hydroxylase.